Reading from the N-terminus, the 253-residue chain is Blue-light photoreceptor (253 aa).

Residues 6-79 (KFDVILKALN…AKIRHAINEK (74 aa)) form the PAS domain. Residue cysteine 56 is modified to S-4a-FMN cysteine. The region spanning 80–133 (STANVLLKNYRKNGTSFMNELTIEPIYDDNDHLYFVGIQKDVTTEHNYQLELEK) is the PAC domain. The 112-residue stretch at 142–253 (STPIVPIKEN…STIKEALQFY (112 aa)) folds into the STAS domain.

Post-translationally, FMN binds covalently to cysteine after exposure to blue light and this bond is spontaneously broken in the dark.

Its function is as follows. Exhibits the same spectroscopical features and blue-light induced photochemistry as plants phototropins, with the reversible formation of a blue-shifted photoproduct, assigned to an FMN-cysteine thiol adduct. Positive regulator in the activation of the general stress transcription factor sigma-B. This chain is Blue-light photoreceptor, found in Listeria innocua serovar 6a (strain ATCC BAA-680 / CLIP 11262).